The primary structure comprises 204 residues: uncharacterized protein (204 aa).

The protein resides in the mitochondrion. This is an uncharacterized protein from Arabidopsis thaliana (Mouse-ear cress).